The chain runs to 176 residues: Isopentenyl-diphosphate Delta-isomerase (176 aa).

Residues His22 and His28 each coordinate Mn(2+). In terms of domain architecture, Nudix hydrolase spans 26 to 160; sequence LRHKAISVFI…PETFTPWLHI (135 aa). Cys62 is an active-site residue. Position 64 (His64) interacts with Mn(2+). Residue Glu82 participates in Mg(2+) binding. Mn(2+) contacts are provided by Glu108 and Glu110. Glu110 is an active-site residue.

It belongs to the IPP isomerase type 1 family. It depends on Mg(2+) as a cofactor. The cofactor is Mn(2+).

Its subcellular location is the cytoplasm. The enzyme catalyses isopentenyl diphosphate = dimethylallyl diphosphate. The protein operates within isoprenoid biosynthesis; dimethylallyl diphosphate biosynthesis; dimethylallyl diphosphate from isopentenyl diphosphate: step 1/1. Its pathway is porphyrin-containing compound metabolism; chlorophyll biosynthesis. Functionally, catalyzes the 1,3-allylic rearrangement of the homoallylic substrate isopentenyl (IPP) to its highly electrophilic allylic isomer, dimethylallyl diphosphate (DMAPP). The protein is Isopentenyl-diphosphate Delta-isomerase of Jannaschia sp. (strain CCS1).